Reading from the N-terminus, the 418-residue chain is Tyrosine--tRNA ligase 1 (418 aa).

Y34 provides a ligand contact to L-tyrosine. The 'HIGH' region motif lies at P39–H48. L-tyrosine contacts are provided by Y169 and Q173. Positions K230–T234 match the 'KMSKS' region motif. Position 233 (K233) interacts with ATP. Residues T352 to Y418 enclose the S4 RNA-binding domain.

Belongs to the class-I aminoacyl-tRNA synthetase family. TyrS type 1 subfamily. In terms of assembly, homodimer.

It localises to the cytoplasm. The catalysed reaction is tRNA(Tyr) + L-tyrosine + ATP = L-tyrosyl-tRNA(Tyr) + AMP + diphosphate + H(+). Functionally, catalyzes the attachment of tyrosine to tRNA(Tyr) in a two-step reaction: tyrosine is first activated by ATP to form Tyr-AMP and then transferred to the acceptor end of tRNA(Tyr). In Bacillus anthracis, this protein is Tyrosine--tRNA ligase 1.